Reading from the N-terminus, the 490-residue chain is Probable cytochrome P450 308a1 (490 aa).

Cys-431 lines the heme pocket.

This sequence belongs to the cytochrome P450 family. Heme serves as cofactor.

It is found in the endoplasmic reticulum membrane. The protein localises to the microsome membrane. Functionally, may be involved in the metabolism of insect hormones and in the breakdown of synthetic insecticides. This is Probable cytochrome P450 308a1 (Cyp308a1) from Drosophila melanogaster (Fruit fly).